We begin with the raw amino-acid sequence, 411 residues long: 2,3-bisphosphoglycerate-independent phosphoglycerate mutase (411 aa).

The segment at V164–K190 is disordered.

Belongs to the BPG-independent phosphoglycerate mutase family. A-PGAM subfamily.

The catalysed reaction is (2R)-2-phosphoglycerate = (2R)-3-phosphoglycerate. It participates in carbohydrate degradation; glycolysis; pyruvate from D-glyceraldehyde 3-phosphate: step 3/5. Its function is as follows. Catalyzes the interconversion of 2-phosphoglycerate and 3-phosphoglycerate. The chain is 2,3-bisphosphoglycerate-independent phosphoglycerate mutase from Methanoculleus marisnigri (strain ATCC 35101 / DSM 1498 / JR1).